A 335-amino-acid chain; its full sequence is Type 1 fimbrin D-mannose specific adhesin (335 aa).

An N-terminal signal peptide occupies residues 1–22; that stretch reads MKIYSALLLAGTALFFTHPALA.

This sequence belongs to the fimbrial protein family.

The protein resides in the fimbrium. Functionally, involved in regulation of length and mediation of adhesion of type 1 fimbriae (but not necessary for the production of fimbriae). A mannose-binding adhesin. In Salmonella typhimurium (strain LT2 / SGSC1412 / ATCC 700720), this protein is Type 1 fimbrin D-mannose specific adhesin (fimH).